A 531-amino-acid polypeptide reads, in one-letter code: Doublesex- and mab-3-related transcription factor A2 (531 aa).

The segment at residues 69 to 116 is a DNA-binding region (DM); it reads CARCRNHGVVSALKGHKRYCRWKDCLCAKCTLIAERQRVMAAQVALRR. The disordered stretch occupies residues 197–312; the sequence is LQAGRPDSPQ…GGPGPRQRTP (116 aa). Residues 274–285 show a composition bias toward low complexity; it reads PGSSSPLGSESG. One can recognise a DMA domain in the interval 310-345; that stretch reads RTPLDILTRVFPGHRRGVLELVLQGCGGDVVQAIEQ.

Belongs to the DMRT family. As to expression, expressed in adult brain and testis, as well as in embryonic ovary, kidney, heart, lung, stomach and brain.

It localises to the nucleus. Functionally, may be involved in sexual development. In Mus musculus (Mouse), this protein is Doublesex- and mab-3-related transcription factor A2 (Dmrta2).